A 476-amino-acid chain; its full sequence is 8-amino-7-oxononanoate synthase (476 aa).

Arginine 24 lines the substrate pocket. 171-172 (GF) is a pyridoxal 5'-phosphate binding site. Histidine 210 contacts substrate. Pyridoxal 5'-phosphate contacts are provided by residues serine 260, 285–288 (DDAH), and 316–319 (TLSK). An N6-(pyridoxal phosphate)lysine modification is found at lysine 319. Threonine 427 is a substrate binding site. Positions 474 to 476 (PKL) match the Peroxisomal targeting signal PTS1 motif.

The protein belongs to the class-II pyridoxal-phosphate-dependent aminotransferase family. BioF subfamily. Monomer. It depends on pyridoxal 5'-phosphate as a cofactor.

The protein resides in the cytoplasm. Its subcellular location is the cytosol. It localises to the peroxisome. It catalyses the reaction 6-carboxyhexanoyl-[ACP] + L-alanine + H(+) = (8S)-8-amino-7-oxononanoate + holo-[ACP] + CO2. It participates in cofactor biosynthesis; biotin biosynthesis; 8-amino-7-oxononanoate from pimeloyl-CoA: step 1/1. Catalyzes the decarboxylative condensation of pimeloyl-[acyl-carrier protein] and L-alanine to produce 8-amino-7-oxononanoate (AON), [acyl-carrier protein], and carbon dioxide. Required for the biosynthesis of D-biotin that prevents light-mediated cell death and modulates defense gene expression, probably by avoiding hydrogen peroxide H(2)O(2) accumulation. The chain is 8-amino-7-oxononanoate synthase from Arabidopsis thaliana (Mouse-ear cress).